Consider the following 373-residue polypeptide: ATP phosphoribosyltransferase regulatory subunit (373 aa).

It belongs to the class-II aminoacyl-tRNA synthetase family. HisZ subfamily. Heteromultimer composed of HisG and HisZ subunits.

The protein resides in the cytoplasm. Its pathway is amino-acid biosynthesis; L-histidine biosynthesis; L-histidine from 5-phospho-alpha-D-ribose 1-diphosphate: step 1/9. In terms of biological role, required for the first step of histidine biosynthesis. May allow the feedback regulation of ATP phosphoribosyltransferase activity by histidine. This Rhizobium leguminosarum bv. trifolii (strain WSM2304) protein is ATP phosphoribosyltransferase regulatory subunit.